The primary structure comprises 283 residues: Accumulation of dyads protein 2 (283 aa).

The tract at residues 1–41 (MSDKEQTSGNTDLENAPAGYYSSHDNDVNGVAEDERPSHDS) is disordered. Over 1–89 (MSDKEQTSGN…APAPVHKFAN (89 aa)) the chain is Cytoplasmic. The helical transmembrane segment at 90–110 (PAPLGLSAFALTTFVLSMFNA) threads the bilayer. Topologically, residues 111–120 (RAQGITVPNV) are extracellular. A helical membrane pass occupies residues 121-141 (VVGCAMFYGGLVQLIAGIWEI). Residues 142–151 (ALENTFGGTA) are Cytoplasmic-facing. A helical transmembrane segment spans residues 152-172 (LCSYGGFWLSFAAIYIPWFGI). Topologically, residues 173 to 185 (LEAYEDNESDLNN) are extracellular. The chain crosses the membrane as a helical span at residues 186–206 (ALGFYLLGWAIFTFGLTVCTM). Residues 207–208 (KS) lie on the Cytoplasmic side of the membrane. A helical transmembrane segment spans residues 209–229 (TVMFFLLFFLLALTFLLLSIG). The Extracellular segment spans residues 230–240 (HFANRLGVTRA). The helical transmembrane segment at 241-261 (GGVLGVVVAFIAWYNAYAGVA) threads the bilayer. Topologically, residues 262–283 (TKQNSYVLARPFPLPSTERVIF) are cytoplasmic.

The protein belongs to the acetate uptake transporter (AceTr) (TC 2.A.96) family.

Its subcellular location is the cell membrane. It is found in the vacuole membrane. Functionally, transporter protein required for ammonia export and acetate uptake and resistance. Necessary for up-regulation and down-regulation of meiotic plaque (MP) component levels in a dependency on external acetate. Has a role in ascus formation. The sequence is that of Accumulation of dyads protein 2 (ADY2) from Saccharomyces cerevisiae (strain ATCC 204508 / S288c) (Baker's yeast).